Reading from the N-terminus, the 207-residue chain is Cyclic di-AMP synthase CdaS (207 aa).

Residues 13 to 37 (AFKGKIQVYLEQILGDASLILKTLH) are a coiled coil. Positions 63–205 (SFYLQSYIEE…DGVLYPLISP (143 aa)) constitute a DAC domain.

It belongs to the adenylate cyclase family. DacB/CdaS subfamily. In terms of assembly, forms dimers and probably also hexamers; the dimer may be active while the hexamer may not be active.

It carries out the reaction 2 ATP = 3',3'-c-di-AMP + 2 diphosphate. Its function is as follows. One of 3 paralogous diadenylate cyclases (DAC) in this bacteria, catalyzing the condensation of 2 ATP molecules into cyclic di-AMP (c-di-AMP). Upon expression in E.coli leads to c-di-AMP synthesis. Overexpression of the hyperactive mutant (L44F) in the absence of c-di-AMP phosphodiesterase GdpP leads to growth defects in log phase (long curly cell filaments) that disappear upon sporulation; spore formation is normal, showing sporulation is insensitive to the excess c-di-AMP. In B.subtilis c-di-AMP is a second messenger that mediates growth, DNA repair and cell wall homeostasis; it is toxic when present in excess. This Bacillus subtilis (strain 168) protein is Cyclic di-AMP synthase CdaS.